The following is a 667-amino-acid chain: Sterile alpha motif domain-containing protein 15 (667 aa).

Residues 1-18 show a composition bias toward acidic residues; it reads MAEVPEDYDSGPDEDGEP. 2 disordered regions span residues 1 to 108 and 147 to 424; these read MAEV…KSER and SAME…IKSK. Basic and acidic residues-rich tracts occupy residues 19-53, 84-93, 187-196, and 228-266; these read ESER…HEPQ, IAKESKRDVP, ESLRVQHEET, and TKPD…KSSE. Acidic residues predominate over residues 268–277; sequence AGLEPPEETQ. 4 stretches are compositionally biased toward basic and acidic residues: residues 284 to 314, 322 to 338, 346 to 364, and 381 to 422; these read MQRK…KSTD, EEIK…KPNE, EMMK…EEKN, and PRVE…EPIK. In terms of domain architecture, SAM spans 538–601; sequence WDPEKVAEWI…SRHTRELLEI (64 aa).

This chain is Sterile alpha motif domain-containing protein 15 (SAMD15), found in Macaca fascicularis (Crab-eating macaque).